We begin with the raw amino-acid sequence, 309 residues long: Probable ABC transporter permease protein YqgH (309 aa).

Transmembrane regions (helical) follow at residues 30 to 50, 88 to 108, 133 to 153, 165 to 185, 214 to 234, and 280 to 300; these read MIVT…TIFL, FIFG…PLGI, LVGI…VPFI, LLAG…SISA, LVPA…ARAF, and NTLW…ILLI. The ABC transmembrane type-1 domain occupies 89–300; sequence IFGSFAVTIL…VMSFLFILLI (212 aa).

It belongs to the binding-protein-dependent transport system permease family. CysTW subfamily.

The protein resides in the cell membrane. Functionally, part of the binding-protein-dependent transport system YqgGHIJK. Probably responsible for the translocation of the substrate across the membrane. This chain is Probable ABC transporter permease protein YqgH (yqgH), found in Bacillus subtilis (strain 168).